Reading from the N-terminus, the 181-residue chain is Acireductone dioxygenase (181 aa).

Positions 97, 99, 103, and 141 each coordinate Fe(2+). Ni(2+)-binding residues include H97, H99, E103, and H141.

This sequence belongs to the acireductone dioxygenase (ARD) family. In terms of assembly, monomer. Fe(2+) serves as cofactor. It depends on Ni(2+) as a cofactor.

It carries out the reaction 1,2-dihydroxy-5-(methylsulfanyl)pent-1-en-3-one + O2 = 3-(methylsulfanyl)propanoate + CO + formate + 2 H(+). The enzyme catalyses 1,2-dihydroxy-5-(methylsulfanyl)pent-1-en-3-one + O2 = 4-methylsulfanyl-2-oxobutanoate + formate + 2 H(+). It functions in the pathway amino-acid biosynthesis; L-methionine biosynthesis via salvage pathway; L-methionine from S-methyl-5-thio-alpha-D-ribose 1-phosphate: step 5/6. Functionally, catalyzes 2 different reactions between oxygen and the acireductone 1,2-dihydroxy-3-keto-5-methylthiopentene (DHK-MTPene) depending upon the metal bound in the active site. Fe-containing acireductone dioxygenase (Fe-ARD) produces formate and 2-keto-4-methylthiobutyrate (KMTB), the alpha-ketoacid precursor of methionine in the methionine recycle pathway. Ni-containing acireductone dioxygenase (Ni-ARD) produces methylthiopropionate, carbon monoxide and formate, and does not lie on the methionine recycle pathway. The protein is Acireductone dioxygenase of Stutzerimonas stutzeri (strain A1501) (Pseudomonas stutzeri).